A 395-amino-acid chain; its full sequence is Acetylornithine aminotransferase (395 aa).

Residues 117–118 (GA) and phenylalanine 144 contribute to the pyridoxal 5'-phosphate site. Residue arginine 147 participates in N(2)-acetyl-L-ornithine binding. Pyridoxal 5'-phosphate is bound at residue 230-233 (DEVQ). At lysine 259 the chain carries N6-(pyridoxal phosphate)lysine. Serine 285 lines the N(2)-acetyl-L-ornithine pocket. Threonine 286 contacts pyridoxal 5'-phosphate.

The protein belongs to the class-III pyridoxal-phosphate-dependent aminotransferase family. ArgD subfamily. Homodimer. The cofactor is pyridoxal 5'-phosphate.

Its subcellular location is the cytoplasm. The catalysed reaction is N(2)-acetyl-L-ornithine + 2-oxoglutarate = N-acetyl-L-glutamate 5-semialdehyde + L-glutamate. It functions in the pathway amino-acid biosynthesis; L-arginine biosynthesis; N(2)-acetyl-L-ornithine from L-glutamate: step 4/4. The chain is Acetylornithine aminotransferase from Methanosarcina acetivorans (strain ATCC 35395 / DSM 2834 / JCM 12185 / C2A).